The primary structure comprises 354 residues: Uroporphyrinogen decarboxylase (354 aa).

Residues 27–31, D77, Y154, S209, and H327 each bind substrate; that span reads RQAGR.

It belongs to the uroporphyrinogen decarboxylase family. As to quaternary structure, homodimer.

It localises to the cytoplasm. It catalyses the reaction uroporphyrinogen III + 4 H(+) = coproporphyrinogen III + 4 CO2. Its pathway is porphyrin-containing compound metabolism; protoporphyrin-IX biosynthesis; coproporphyrinogen-III from 5-aminolevulinate: step 4/4. Functionally, catalyzes the decarboxylation of four acetate groups of uroporphyrinogen-III to yield coproporphyrinogen-III. This is Uroporphyrinogen decarboxylase from Teredinibacter turnerae (strain ATCC 39867 / T7901).